Here is a 220-residue protein sequence, read N- to C-terminus: ATP synthase subunit delta (220 aa).

Belongs to the ATPase delta chain family. In terms of assembly, F-type ATPases have 2 components, F(1) - the catalytic core - and F(0) - the membrane proton channel. F(1) has five subunits: alpha(3), beta(3), gamma(1), delta(1), epsilon(1). F(0) has three main subunits: a(1), b(2) and c(10-14). The alpha and beta chains form an alternating ring which encloses part of the gamma chain. F(1) is attached to F(0) by a central stalk formed by the gamma and epsilon chains, while a peripheral stalk is formed by the delta and b chains.

Its subcellular location is the cell inner membrane. In terms of biological role, f(1)F(0) ATP synthase produces ATP from ADP in the presence of a proton or sodium gradient. F-type ATPases consist of two structural domains, F(1) containing the extramembraneous catalytic core and F(0) containing the membrane proton channel, linked together by a central stalk and a peripheral stalk. During catalysis, ATP synthesis in the catalytic domain of F(1) is coupled via a rotary mechanism of the central stalk subunits to proton translocation. Functionally, this protein is part of the stalk that links CF(0) to CF(1). It either transmits conformational changes from CF(0) to CF(1) or is implicated in proton conduction. This is ATP synthase subunit delta from Gluconobacter oxydans (strain 621H) (Gluconobacter suboxydans).